Here is a 302-residue protein sequence, read N- to C-terminus: Sulfate adenylyltransferase subunit 2 (302 aa).

The protein belongs to the PAPS reductase family. CysD subfamily. In terms of assembly, heterodimer composed of CysD, the smaller subunit, and CysN.

The enzyme catalyses sulfate + ATP + H(+) = adenosine 5'-phosphosulfate + diphosphate. It functions in the pathway sulfur metabolism; hydrogen sulfide biosynthesis; sulfite from sulfate: step 1/3. Its function is as follows. With CysN forms the ATP sulfurylase (ATPS) that catalyzes the adenylation of sulfate producing adenosine 5'-phosphosulfate (APS) and diphosphate, the first enzymatic step in sulfur assimilation pathway. APS synthesis involves the formation of a high-energy phosphoric-sulfuric acid anhydride bond driven by GTP hydrolysis by CysN coupled to ATP hydrolysis by CysD. This is Sulfate adenylyltransferase subunit 2 from Proteus mirabilis (strain HI4320).